Reading from the N-terminus, the 416-residue chain is Glutamyl-tRNA reductase (416 aa).

Residues 49–52 (TCNR), Ser105, 110–112 (EPQ), and Gln116 contribute to the substrate site. Cys50 serves as the catalytic Nucleophile. Position 185–190 (185–190 (GAGETI)) interacts with NADP(+).

It belongs to the glutamyl-tRNA reductase family. In terms of assembly, homodimer.

It catalyses the reaction (S)-4-amino-5-oxopentanoate + tRNA(Glu) + NADP(+) = L-glutamyl-tRNA(Glu) + NADPH + H(+). It participates in porphyrin-containing compound metabolism; protoporphyrin-IX biosynthesis; 5-aminolevulinate from L-glutamyl-tRNA(Glu): step 1/2. Catalyzes the NADPH-dependent reduction of glutamyl-tRNA(Glu) to glutamate 1-semialdehyde (GSA). The sequence is that of Glutamyl-tRNA reductase from Shewanella putrefaciens (strain CN-32 / ATCC BAA-453).